The primary structure comprises 162 residues: MTPRKPFWQTKTLAEMTVPEWESLCDGCGLCCLVRFEDEDTGEIIPTRVHCQLFDERLCRCKDYPNRKKTVPDCIKLTPYNIEDLEWMPPSCAYRRLHEGKDLPLWHPLVTGDPESTHKAGVSIRNQTVSELSFKDAEDAMDFVATDLMRDRGDDLYEPEEG.

This sequence belongs to the UPF0260 family.

This is UPF0260 protein CC_3276 from Caulobacter vibrioides (strain ATCC 19089 / CIP 103742 / CB 15) (Caulobacter crescentus).